Here is a 437-residue protein sequence, read N- to C-terminus: MDGLDNTTRLLAPSSLLPDNLTLSPNASSTSASTLSPLPVTSSPSPGLSLAPTPSIGFSPDLTPTPEPTSSSLAGGVAGQDSSTFPRPWIPHEPPFWDTPLNHGLNVFVGAALCITMLGLGCTVDVNHFGAHVRRPVGALLAALCQFGFLPLLAFLLALAFKLDEVAAVAVLLCGCCPGGNLSNLMSLLVDGDMNLSIIMTISSTLLALVLMPLCLWIYSRAWINTPLVQLLPLGAVTLTLCSTLIPIGLGVFIRYKYNRVADYIVKVSLCSLLVTLVVLFIMTGTMLGPELLASIPAAVYVVAIFMPLAGYASGYGLATLFHLPPNCKRTVCLETGSQNVQLCTAILKLAFPPRFIGSMYMFPLLYALFQSAEAGVFVLIYKMYGSEILHKREALDEDDDTDISYKKLKEEELADTSYGTVGTDDLVLMETTQTSL.

The Extracellular portion of the chain corresponds to 1 to 103 (MDGLDNTTRL…PPFWDTPLNH (103 aa)). N-linked (GlcNAc...) asparagine glycans are attached at residues Asn-6, Asn-20, and Asn-26. The tract at residues 16–84 (LLPDNLTLSP…GGVAGQDSST (69 aa)) is disordered. Residues 21-50 (LTLSPNASSTSASTLSPLPVTSSPSPGLSL) show a composition bias toward low complexity. A helical membrane pass occupies residues 104-124 (GLNVFVGAALCITMLGLGCTV). The Cytoplasmic segment spans residues 125-140 (DVNHFGAHVRRPVGAL). A helical transmembrane segment spans residues 141 to 161 (LAALCQFGFLPLLAFLLALAF). At 162 to 197 (KLDEVAAVAVLLCGCCPGGNLSNLMSLLVDGDMNLS) the chain is on the extracellular side. Asn-181 and Asn-195 each carry an N-linked (GlcNAc...) asparagine glycan. Residues 198–218 (IIMTISSTLLALVLMPLCLWI) form a helical membrane-spanning segment. At 219-233 (YSRAWINTPLVQLLP) the chain is on the cytoplasmic side. The chain crosses the membrane as a helical span at residues 234–254 (LGAVTLTLCSTLIPIGLGVFI). Residues 255-267 (RYKYNRVADYIVK) are Extracellular-facing. Residues 268 to 288 (VSLCSLLVTLVVLFIMTGTML) form a helical membrane-spanning segment. At 289 to 291 (GPE) the chain is on the cytoplasmic side. Residues 292 to 312 (LLASIPAAVYVVAIFMPLAGY) form a helical membrane-spanning segment. Residues 313–360 (ASGYGLATLFHLPPNCKRTVCLETGSQNVQLCTAILKLAFPPRFIGSM) are Extracellular-facing. A helical membrane pass occupies residues 361-381 (YMFPLLYALFQSAEAGVFVLI). Topologically, residues 382–437 (YKMYGSEILHKREALDEDDDTDISYKKLKEEELADTSYGTVGTDDLVLMETTQTSL) are cytoplasmic.

The protein belongs to the bile acid:sodium symporter (BASS) (TC 2.A.28) family. Activated following N-terminal proteolytic cleavage by thrombin and/or proteases. In terms of tissue distribution, mainly expressed in the central nervous system cholinergic neurons. Expressed (at protein level) in motor regions of the spinal cord and rhombencephalon, in mesopontine cholinergic neurons, the medial habenula, cholinergic areas of the forebrain, and the gut myenteric plexus.

It localises to the cell membrane. Functionally, transporter for bile acids. In Rattus norvegicus (Rat), this protein is Sodium/bile acid cotransporter 4 (Slc10a4).